Consider the following 228-residue polypeptide: L-ribulose-5-phosphate 4-epimerase UlaF (228 aa).

Substrate is bound by residues 26–27 (GN), 43–44 (SG), and 72–73 (SS). The Zn(2+) site is built by aspartate 74, histidine 93, and histidine 95. Aspartate 118 acts as the Proton donor/acceptor in catalysis. Histidine 167 is a Zn(2+) binding site. The active-site Proton donor/acceptor is tyrosine 225.

Belongs to the aldolase class II family. AraD/FucA subfamily. Zn(2+) is required as a cofactor.

It catalyses the reaction L-ribulose 5-phosphate = D-xylulose 5-phosphate. It participates in cofactor degradation; L-ascorbate degradation; D-xylulose 5-phosphate from L-ascorbate: step 4/4. Catalyzes the isomerization of L-ribulose 5-phosphate to D-xylulose 5-phosphate. Is involved in the anaerobic L-ascorbate utilization. In Escherichia coli (strain K12 / MC4100 / BW2952), this protein is L-ribulose-5-phosphate 4-epimerase UlaF.